The sequence spans 808 residues: Phospholipase D alpha 1 (808 aa).

A C2 domain is found at 1-125 (MSKVLLHGTL…LDGDEVDKWI (125 aa)). Aspartate 186 contributes to the Ca(2+) binding site. The 39-residue stretch at 326–364 (TMFTHHQKIVVVDHELPRGGSQKRRVMSFVGGIDLCDGR) folds into the PLD phosphodiesterase 1 domain. Catalysis depends on residues histidine 331, lysine 333, and aspartate 338. An a 1,2-diacyl-sn-glycero-3-phosphate-binding site is contributed by histidine 331. Ca(2+)-binding residues include histidine 370 and histidine 404. A 1,2-diacyl-sn-glycero-3-phosphate is bound by residues glutamine 520 and histidine 659. In terms of domain architecture, PLD phosphodiesterase 2 spans 654–681 (FMIYVHSKMMIVDDEYIIVGSANINQRS). Catalysis depends on residues histidine 659, lysine 661, and aspartate 666. Glutamate 720 provides a ligand contact to Ca(2+).

The protein belongs to the phospholipase D family. C2-PLD subfamily. Interacts (via C2 domain) with CARDA (via RGD or KGE motifs). It depends on Ca(2+) as a cofactor.

The enzyme catalyses a 1,2-diacyl-sn-glycero-3-phosphocholine + H2O = a 1,2-diacyl-sn-glycero-3-phosphate + choline + H(+). Its function is as follows. Hydrolyzes glycerol-phospholipids at the terminal phosphodiesteric bond. Plays an important role in various cellular processes. This is Phospholipase D alpha 1 from Cynara cardunculus (Cardoon).